Reading from the N-terminus, the 736-residue chain is Prolyl 3-hydroxylase 3 (736 aa).

The signal sequence occupies residues 1 to 20 (MLRLLRPLLLLLLLPPPGSP). 3 TPR repeats span residues 37–70 (PDLLYADGLRAYAAGAWAPAVALLREALRSQAAL), 154–187 (REPYNYLQRAYYQLKKLDLAAAAAHTFFVANPMH), and 216–249 (HWAAYDTGLELLGRQEAGLALPRLEEALQGSLAQ). The disordered stretch occupies residues 253–275 (CRADCEGPEEQQGAEEEEDGAAS). The segment covering 258-272 (EGPEEQQGAEEEEDG) has biased composition (acidic residues). A TPR 4 repeat occupies 316 to 349 (PNQLRRLHEAHAQVGNLSQAIENVLSVLLFYPED). N-linked (GlcNAc...) asparagine glycans are attached at residues Asn-331 and Asn-462. Residues 561 to 675 (THLVCRSAIE…RCALALWHTW (115 aa)) form the Fe2OG dioxygenase domain. Positions 584, 586, and 656 each coordinate Fe cation. The active site involves Arg-666. A coiled-coil region spans residues 681–709 (EQEWIEAKELLQESQEEEEEEEEEMPSKD). The segment at 689–736 (ELLQESQEEEEEEEEEMPSKDPSPEPPSRRHQRVQDKTGRAPRVREEL) is disordered. Acidic residues predominate over residues 694–704 (SQEEEEEEEEE). The span at 721–736 (RVQDKTGRAPRVREEL) shows a compositional bias: basic and acidic residues. The Prevents secretion from ER motif lies at 733-736 (REEL).

Belongs to the leprecan family. Identified in a complex with PLOD1 and P3H4. The cofactor is Fe cation. Requires L-ascorbate as cofactor. In terms of tissue distribution, detected in fetal cartilage (at protein level). Weak expression in heart, lung, ovary and skeletal muscle.

It is found in the endoplasmic reticulum. It carries out the reaction L-prolyl-[collagen] + 2-oxoglutarate + O2 = trans-3-hydroxy-L-prolyl-[collagen] + succinate + CO2. Functionally, part of a complex composed of PLOD1, P3H3 and P3H4 that catalyzes hydroxylation of lysine residues in collagen alpha chains and is required for normal assembly and cross-linkling of collagen fibrils. Required for normal hydroxylation of lysine residues in type I collagen chains in skin, bone, tendon, aorta and cornea. Required for normal skin stability via its role in hydroxylation of lysine residues in collagen alpha chains and in collagen fibril assembly. Apparently not required for normal prolyl 3-hydroxylation on collagen chains, possibly because it functions redundantly with other prolyl 3-hydroxylases. This is Prolyl 3-hydroxylase 3 from Homo sapiens (Human).